We begin with the raw amino-acid sequence, 349 residues long: DNA integrity scanning protein DisA (349 aa).

The DAC domain maps to 3–143 (KQDLMDIIVK…LKYRLKNFDE (141 aa)). Residues G70, V88, and 101–105 (TRHRT) contribute to the ATP site.

Belongs to the DisA family. As to quaternary structure, homooctamer. Mg(2+) is required as a cofactor.

It carries out the reaction 2 ATP = 3',3'-c-di-AMP + 2 diphosphate. Participates in a DNA-damage check-point. DisA forms globular foci that rapidly scan along the chromosomes searching for lesions. In terms of biological role, also has diadenylate cyclase activity, catalyzing the condensation of 2 ATP molecules into cyclic di-AMP (c-di-AMP). c-di-AMP likely acts as a signaling molecule that may couple DNA integrity with a cellular process. The polypeptide is DNA integrity scanning protein DisA (Fusobacterium nucleatum subsp. nucleatum (strain ATCC 25586 / DSM 15643 / BCRC 10681 / CIP 101130 / JCM 8532 / KCTC 2640 / LMG 13131 / VPI 4355)).